A 226-amino-acid chain; its full sequence is Cobalt transport protein CbiM 2 (226 aa).

6 consecutive transmembrane segments (helical) span residues 6–26 (GFLP…VVAY), 43–63 (MLLG…MPSV), 75–95 (LGAI…VLLF), 107–127 (TLGA…AAVF), 135–155 (FPFG…TYVT), and 181–201 (VFAL…VVVM).

This sequence belongs to the CbiM family. In terms of assembly, forms an energy-coupling factor (ECF) transporter complex composed of an ATP-binding protein (A component, CbiO), a transmembrane protein (T component, CbiQ) and 2 possible substrate-capture proteins (S components, CbiM and CbiN) of unknown stoichimetry.

The protein localises to the cell inner membrane. It functions in the pathway cofactor biosynthesis; adenosylcobalamin biosynthesis. Functionally, part of the energy-coupling factor (ECF) transporter complex CbiMNOQ involved in cobalt import. The protein is Cobalt transport protein CbiM 2 of Pelobacter propionicus (strain DSM 2379 / NBRC 103807 / OttBd1).